We begin with the raw amino-acid sequence, 238 residues long: Peroxisomal biogenesis factor 11 (238 aa).

This sequence belongs to the peroxin-11 family.

Its subcellular location is the mitochondrion. The protein resides in the peroxisome membrane. Functionally, involved in peroxisomal proliferation. Promotes peroxisome division and biogenesis. The protein is Peroxisomal biogenesis factor 11 (pex11) of Schizosaccharomyces pombe (strain 972 / ATCC 24843) (Fission yeast).